The chain runs to 495 residues: Chromosomal replication initiator protein DnaA (495 aa).

Positions methionine 1 to glutamine 91 are domain I, interacts with DnaA modulators. The segment at glutamine 91–valine 154 is domain II. The interval serine 155–alanine 371 is domain III, AAA+ region. Residues glycine 199, glycine 201, lysine 202, and threonine 203 each coordinate ATP. Residues serine 372 to arginine 495 form a domain IV, binds dsDNA region.

The protein belongs to the DnaA family. Oligomerizes as a right-handed, spiral filament on DNA at oriC.

It localises to the cytoplasm. In terms of biological role, plays an essential role in the initiation and regulation of chromosomal replication. ATP-DnaA binds to the origin of replication (oriC) to initiate formation of the DNA replication initiation complex once per cell cycle. Binds the DnaA box (a 9 base pair repeat at the origin) and separates the double-stranded (ds)DNA. Forms a right-handed helical filament on oriC DNA; dsDNA binds to the exterior of the filament while single-stranded (ss)DNA is stabiized in the filament's interior. The ATP-DnaA-oriC complex binds and stabilizes one strand of the AT-rich DNA unwinding element (DUE), permitting loading of DNA polymerase. After initiation quickly degrades to an ADP-DnaA complex that is not apt for DNA replication. Binds acidic phospholipids. The polypeptide is Chromosomal replication initiator protein DnaA (Mycobacterium sp. (strain JLS)).